We begin with the raw amino-acid sequence, 502 residues long: Putative diacyglycerol O-acyltransferase MT1809 (502 aa).

Catalysis depends on His174, which acts as the Proton acceptor.

Belongs to the long-chain O-acyltransferase family.

It carries out the reaction an acyl-CoA + a 1,2-diacyl-sn-glycerol = a triacyl-sn-glycerol + CoA. It participates in glycerolipid metabolism; triacylglycerol biosynthesis. The sequence is that of Putative diacyglycerol O-acyltransferase MT1809 from Mycobacterium tuberculosis (strain CDC 1551 / Oshkosh).